Consider the following 390-residue polypeptide: Transaldolase (390 aa).

Lys-135 acts as the Schiff-base intermediate with substrate in catalysis. EF-hand domains are found at residues 329-364 (AFCH…FDAL) and 365-388 (DHDH…LALT). Asp-342, Asp-344, Asp-346, Cys-348, Glu-353, Asp-365, Asp-367, Asp-369, Arg-371, and Asp-376 together coordinate Ca(2+).

This sequence belongs to the transaldolase family. Type 1 subfamily.

The protein localises to the cytoplasm. It catalyses the reaction D-sedoheptulose 7-phosphate + D-glyceraldehyde 3-phosphate = D-erythrose 4-phosphate + beta-D-fructose 6-phosphate. It participates in carbohydrate degradation; pentose phosphate pathway; D-glyceraldehyde 3-phosphate and beta-D-fructose 6-phosphate from D-ribose 5-phosphate and D-xylulose 5-phosphate (non-oxidative stage): step 2/3. Its function is as follows. Transaldolase is important for the balance of metabolites in the pentose-phosphate pathway. This is Transaldolase from Prochlorococcus marinus (strain MIT 9313).